Consider the following 782-residue polypeptide: HHIP-like protein 1 (782 aa).

The first 19 residues, 1 to 19, serve as a signal peptide directing secretion; it reads MARARAGALLALWVLGAAA. 4 disulfides stabilise this stretch: cysteine 181–cysteine 521, cysteine 185–cysteine 528, cysteine 399–cysteine 417, and cysteine 484–cysteine 584. Asparagine 234 carries N-linked (GlcNAc...) asparagine glycosylation. The disordered stretch occupies residues 604-666; sequence EKFIPKTRST…RRGRLNSASR (63 aa). Over residues 610-623 the composition is skewed to low complexity; sequence TRSTPRPTARAPTR. The span at 632 to 642 shows a compositional bias: pro residues; that stretch reads AAPPAPTPRPA. Positions 673-776 constitute an SRCR domain; that stretch reads VRLVRPAGLS…HDEDAGVVCS (104 aa). 3 cysteine pairs are disulfide-bonded: cysteine 700/cysteine 765, cysteine 713/cysteine 775, and cysteine 745/cysteine 755.

The protein belongs to the HHIP family.

The protein localises to the secreted. This Homo sapiens (Human) protein is HHIP-like protein 1 (HHIPL1).